The sequence spans 80 residues: Exodeoxyribonuclease 7 small subunit (80 aa).

The protein belongs to the XseB family. Heterooligomer composed of large and small subunits.

It localises to the cytoplasm. The enzyme catalyses Exonucleolytic cleavage in either 5'- to 3'- or 3'- to 5'-direction to yield nucleoside 5'-phosphates.. In terms of biological role, bidirectionally degrades single-stranded DNA into large acid-insoluble oligonucleotides, which are then degraded further into small acid-soluble oligonucleotides. The sequence is that of Exodeoxyribonuclease 7 small subunit from Oleidesulfovibrio alaskensis (strain ATCC BAA-1058 / DSM 17464 / G20) (Desulfovibrio alaskensis).